A 1803-amino-acid polypeptide reads, in one-letter code: MKQSVRPIISNVLRKEVALYSTIIGQDKGKEPTGRTYTSGPKPASHIEVPHHVTVPATDRTPNPDAQFFQSVDGSQATSHVAYALSDTAFIYPITPSSVMGELADVWMAQGRKNAFGQVVDVREMQSEAGAAGALHGALAAGAIATTFTASQGLLLMIPNMYKIAGELMPSVIHVAARELAGHALSIFGGHADVMAVRQTGWAMLCSHTVQQSHDMALISHVATLKSSIPFVHFFDGFRTSHEVNKIKMLPYAELKKLVPPGTMEQHWARSLNPMHPTIRGTNQSADIYFQNMESANQYYTDLAEVVQETMDEVAPYIGRHYKIFEYVGAPDAEEVTVLMGSGATTVNEAVDLLVKRGKKVGAVLVHLYRPWSTKAFEKVLPKTVKRIAALDRCKEVTALGEPLYLDVSATLNLFPERQNVKVIGGRYGLGSKDFIPEHALAIYANLASENPIQRFTVGITDDVTGTSVPFVNERVDTLPEGTRQCVFWGIGSDGTVGANRSAVRIIGDNSDLMVQAYFQFDAFKSGGVTSSHLRFGPKPITAQYLVTNADYIACHFQEYVKRFDMLDAIREGGTFVLNSRWTTEDMEKEIPADFRRNVAQKKVRFYNVDARKICDSFGLGKRINMLMQACFFKLSGVLPLAEAQRLLNESIVHEYGKKGGKVVEMNQAVVNAVFAGDLPQEVQVPAAWANAVDTSTRTPTGIEFVDKIMRPLMDFKGDQLPVSVMTPGGTFPVGTTQYAKRAIAAFIPQWIPANCTQCNYCSYVCPHATIRPFVLTDQEVQLAPESFVTRKAKGDYQGMNFRIQVAPEDCTGCQVCVETCPDDALEMTDAFTATPVQRTNWEFAIKVPNRGTMTDRYSLKGSQFQQPLLEFSGACEGCGETPYVKLLTQLFGERTVIANATGCSSIWGGTAGLAPYTTNAKGQGPAWGNSLFEDNAEFGFGIAVANAQKRSRVRDCILQAVEKKVADEGLTTLLAQWLQDWNTGDKTLKYQDQIIAGLAQQRSKDPLLEQIYGMKDMLPNISQWIIGGDGWANDIGFGGLDHVLASGQNLNVLVLDTEMYSNTGGQASKSTHMASVAKFALGGKRTNKKNLTEMAMSYGNVYVATVSHGNMAQCVKAFVEAESYDGPSLIVGYAPCIEHGLRAGMARMVQESEAAIATGYWPLYRFDPRLATEGKNPFQLDSKRIKGNLQEYLDRQNRYVNLKKNNPKGADLLKSQMADNITARFNRYRRMLEGPNTKAAAPSGNHVTILYGSETGNSEGLAKELATDFERREYSVAVQALDDIDVADLENMGFVVIAVSTCGQGQFPRNSQLFWRELQRDKPEGWLKNLKYTVFGLGDSTYYFYCHTAKQIDARLAALGAQRVVPIGFGDDGDEDMFHTGFNNWIPSVWNELKTKTPEEALFTPSIAVQLTPNATPQDFHFAKSTPVLSITGAERITPADHTRNFVTIRWKTDLSYQVGDSLGVFPENTRSVVEEFLQYYGLNPKDVITIENKGSRELPHCMAVGDLFTKVLDILGKPNNRFYKTLSYFAVDKAEKERLLKIAEMGPEYSNILSEMYHYADIFHMFPSARPTLQYLIEMIPNIKPRYYSISSAPIHTPGEVHSLVLIDTWITLSGKHRTGLTCTMLEHLQAGQVVDGCIHPTAMEFPDHEKPVVMCAMGSGLAPFVAFLRERSTLRKQGKKTGNMALYFGNRYEKTEFLMKEELKGHINDGLLTLRCAFSRDDPKKKVYVQDLIKMDEKMMYDYLVVQKGSMYCCGSRSFIKPVQESLKHCFMKAGGLTAEQAENEVIDMFTTGRYNIEAW.

The transit peptide at 1 to 37 (MKQSVRPIISNVLRKEVALYSTIIGQDKGKEPTGRTY) directs the protein to the mitochondrion. 4Fe-4S ferredoxin-type domains follow at residues 747 to 776 (FIPQ…PFVL) and 802 to 831 (FRIQ…MTDA). [4Fe-4S] cluster contacts are provided by Cys756, Cys759, Cys762, Cys766, Cys811, Cys814, Cys817, and Cys821. Positions 1248-1391 (VTILYGSETG…GFNNWIPSVW (144 aa)) constitute a Flavodoxin-like domain. Residues 1425–1650 (KSTPVLSITG…IHPTAMEFPD (226 aa)) form the FAD-binding FR-type domain. Residues 1458–1469 (YQVGDSLGVFPE) and 1585–1595 (IKPRYYSISSA) each bind FAD.

This sequence in the N-terminal section; belongs to the pyruvate:ferredoxin/flavodoxin oxidoreductase family. As to quaternary structure, homodimer. It depends on FAD as a cofactor. Requires FMN as cofactor. Thiamine diphosphate serves as cofactor. The cofactor is iron-sulfur cluster.

It localises to the mitochondrion. It carries out the reaction pyruvate + NADP(+) + CoA = acetyl-CoA + CO2 + NADPH. Its function is as follows. Pyruvate dehydrogenase [NADP(+)] is one of three enzymes participating in respiratory metabolism. The enzyme is also active with 2-oxobutyrate and oxaloacetate. The enzyme is oxygen sensitive. This is Pyruvate dehydrogenase [NADP(+)], mitochondrial (PNO) from Euglena gracilis.